The following is a 452-amino-acid chain: Agmatine coumaroyltransferase (452 aa).

Catalysis depends on proton acceptor residues His-163 and Asp-396.

The protein belongs to the plant acyltransferase family.

It catalyses the reaction 4-coumaroyl-CoA + agmatine = N-(4-guanidinobutyl)-4-hydroxycinnamamide + CoA + H(+). Its function is as follows. Involved in the biosynthesis of hydroxycinnamic acid amides, which play a role in defense against pathogens. Agmatine is the preferred acyl acceptor, lower activity is observed towards putrescine. The preferred acyl donor is p-coumaroyl-CoA, lower activity is seen towards feruloyl-CoA. The protein is Agmatine coumaroyltransferase of Arabidopsis thaliana (Mouse-ear cress).